Reading from the N-terminus, the 432-residue chain is Enolase (432 aa).

Glutamine 164 is a (2R)-2-phosphoglycerate binding site. Glutamate 206 (proton donor) is an active-site residue. Residues aspartate 243, glutamate 289, and aspartate 316 each contribute to the Mg(2+) site. Positions 341, 370, 371, and 392 each coordinate (2R)-2-phosphoglycerate. Lysine 341 acts as the Proton acceptor in catalysis.

This sequence belongs to the enolase family. Mg(2+) is required as a cofactor.

The protein localises to the cytoplasm. It localises to the secreted. The protein resides in the cell surface. The catalysed reaction is (2R)-2-phosphoglycerate = phosphoenolpyruvate + H2O. It participates in carbohydrate degradation; glycolysis; pyruvate from D-glyceraldehyde 3-phosphate: step 4/5. In terms of biological role, catalyzes the reversible conversion of 2-phosphoglycerate (2-PG) into phosphoenolpyruvate (PEP). It is essential for the degradation of carbohydrates via glycolysis. This is Enolase from Borrelia duttonii (strain Ly).